The primary structure comprises 267 residues: 26S proteasome non-ATPase regulatory subunit 8 homolog A (267 aa).

Met-1 is modified (N-acetylmethionine). The 173-residue stretch at 79-251 (DAFERDFFQL…APCKEIPSLQ (173 aa)) folds into the PCI domain.

The protein belongs to the proteasome subunit S14 family. As to quaternary structure, component of the 19S regulatory particle (RP/PA700) lid subcomplex of the 26S proteasome. The 26S proteasome is composed of a core protease (CP), known as the 20S proteasome, capped at one or both ends by the 19S regulatory particle (RP/PA700). The RP/PA700 complex is composed of at least 17 different subunits in two subcomplexes, the base and the lid, which form the portions proximal and distal to the 20S proteolytic core, respectively. Interacts with PUB22 and PUB23. Binds to the translation initiation factors TIF3E1. Interacts with UCH1 and UCH2. In terms of processing, ubiquitinated by PUB22 and PUB23. As to expression, ubiquitous with highest expression in flowers.

In terms of biological role, acts as a regulatory subunit of the 26S proteasome which is involved in the ATP-dependent degradation of ubiquitinated proteins. May help to control the degradation of one or more factors that repress cytokinin signaling. Plays an important role for balancing cell expansion with cell proliferation rates during shoot development. The polypeptide is 26S proteasome non-ATPase regulatory subunit 8 homolog A (Arabidopsis thaliana (Mouse-ear cress)).